The primary structure comprises 131 residues: Transcription antitermination protein NusB (131 aa).

Belongs to the NusB family.

Its function is as follows. Involved in transcription antitermination. Required for transcription of ribosomal RNA (rRNA) genes. Binds specifically to the boxA antiterminator sequence of the ribosomal RNA (rrn) operons. This chain is Transcription antitermination protein NusB, found in Campylobacter concisus (strain 13826).